The chain runs to 306 residues: MPISSHSHSGQFCLHAQGKLEDVIQEAIQQGFQSFSFTEHTPRDRVEDLYPEELHLQPEDLFKTFDEYVNEARRLKQNYGDQINILIGAETEYIRPESVELLKSLNTKYNLDYFVGSVHHVNSIPIDFSPELWQKALQHVGNNPEQLFIDYFEHQYDLMQRLHPLVIGHFDLICLFAPEDAKEVFKNSKSVWELIQRNIKYAVSYGGIFEINTSAFRKGWKTAYPQQRLLELMVEQGAQLTLSDDSHGPHQVGLNYHLAKSYLDKCGITSLCMIEKGPDGNGTVVKNVTVDNVWSKFVGTNGITNT.

It belongs to the PHP hydrolase family. HisK subfamily.

The enzyme catalyses L-histidinol phosphate + H2O = L-histidinol + phosphate. It functions in the pathway amino-acid biosynthesis; L-histidine biosynthesis; L-histidine from 5-phospho-alpha-D-ribose 1-diphosphate: step 8/9. In Schizosaccharomyces pombe (strain 972 / ATCC 24843) (Fission yeast), this protein is Probable histidinol-phosphatase.